The following is a 431-amino-acid chain: UDP-N-acetylglucosamine 1-carboxyvinyltransferase (431 aa).

24–25 (KN) serves as a coordination point for phosphoenolpyruvate. Arg95 is a binding site for UDP-N-acetyl-alpha-D-glucosamine. Asp119 functions as the Proton donor in the catalytic mechanism. UDP-N-acetyl-alpha-D-glucosamine is bound by residues Asp314 and Met336.

It belongs to the EPSP synthase family. MurA subfamily.

The protein resides in the cytoplasm. The enzyme catalyses phosphoenolpyruvate + UDP-N-acetyl-alpha-D-glucosamine = UDP-N-acetyl-3-O-(1-carboxyvinyl)-alpha-D-glucosamine + phosphate. The protein operates within cell wall biogenesis; peptidoglycan biosynthesis. Its function is as follows. Cell wall formation. Adds enolpyruvyl to UDP-N-acetylglucosamine. The protein is UDP-N-acetylglucosamine 1-carboxyvinyltransferase of Bradyrhizobium diazoefficiens (strain JCM 10833 / BCRC 13528 / IAM 13628 / NBRC 14792 / USDA 110).